The chain runs to 121 residues: MKLDMKQPRKQRKFLYNAPLHLRGKIMSAPLSKELREKYGVRNLPIRVGDKVKVMRGDFKGVEGKVVEVDLRRYRIHVEGVTHKKTDGTEVFYPLHPSNVMIVELNLEDEKREKIIERRAA.

It belongs to the universal ribosomal protein uL24 family. In terms of assembly, part of the 50S ribosomal subunit.

Its function is as follows. One of two assembly initiator proteins, it binds directly to the 5'-end of the 23S rRNA, where it nucleates assembly of the 50S subunit. In terms of biological role, located at the polypeptide exit tunnel on the outside of the subunit. This chain is Large ribosomal subunit protein uL24, found in Thermococcus kodakarensis (strain ATCC BAA-918 / JCM 12380 / KOD1) (Pyrococcus kodakaraensis (strain KOD1)).